A 180-amino-acid chain; its full sequence is Transcription factor HES-7.1-A (180 aa).

The 58-residue stretch at 13-70 (HRKLLKPLVEKRRRERINNSLEKLRIFLFQTLKSEKLKNPKVEKAEILECTVQFLQSR) folds into the bHLH domain. In terms of domain architecture, Orange spans 84–116 (YQSGFQHCLETTLHFMNSKPDMNGVTKELLSHQ). The WRPW motif motif lies at 176 to 179 (WRPW).

In terms of assembly, transcription repression requires formation of a complex with a corepressor protein of the Groucho/TLE family. In terms of tissue distribution, expressed in the presumptive midbrain-hindbrain boundary (MHB) as early as the early gastrula stage (stage 10.5). Expression in the MHB continues through to tailbud stage. Also transiently expressed in the eye anlage at late neurula stage.

It localises to the nucleus. Its function is as follows. Transcriptional repressor. Represses transcription from both N box- and E box-containing promoters. Demarcates the prospective midbrain-hindbrain boundary (MHB) region in the neuroectoderm in early gastrulae embryos by repressing transcription of a number of target genes. This is Transcription factor HES-7.1-A (hes7.1-a) from Xenopus laevis (African clawed frog).